The sequence spans 248 residues: Probable transcriptional regulatory protein Noc_0137 (248 aa).

Belongs to the TACO1 family.

It is found in the cytoplasm. The sequence is that of Probable transcriptional regulatory protein Noc_0137 from Nitrosococcus oceani (strain ATCC 19707 / BCRC 17464 / JCM 30415 / NCIMB 11848 / C-107).